Here is a 245-residue protein sequence, read N- to C-terminus: 4-hydroxy-tetrahydrodipicolinate reductase (245 aa).

Residues 7-12 (GAKGKV), 75-77 (GTT), and 102-105 (APNF) each bind NAD(+). The Proton donor/acceptor role is filled by His-132. His-133 provides a ligand contact to (S)-2,3,4,5-tetrahydrodipicolinate. Residue Lys-136 is the Proton donor of the active site. Residue 142–143 (GT) coordinates (S)-2,3,4,5-tetrahydrodipicolinate.

Belongs to the DapB family.

It localises to the cytoplasm. The catalysed reaction is (S)-2,3,4,5-tetrahydrodipicolinate + NAD(+) + H2O = (2S,4S)-4-hydroxy-2,3,4,5-tetrahydrodipicolinate + NADH + H(+). The enzyme catalyses (S)-2,3,4,5-tetrahydrodipicolinate + NADP(+) + H2O = (2S,4S)-4-hydroxy-2,3,4,5-tetrahydrodipicolinate + NADPH + H(+). It participates in amino-acid biosynthesis; L-lysine biosynthesis via DAP pathway; (S)-tetrahydrodipicolinate from L-aspartate: step 4/4. In terms of biological role, catalyzes the conversion of 4-hydroxy-tetrahydrodipicolinate (HTPA) to tetrahydrodipicolinate. The protein is 4-hydroxy-tetrahydrodipicolinate reductase of Mycobacterium tuberculosis (strain ATCC 25177 / H37Ra).